Here is a 128-residue protein sequence, read N- to C-terminus: NADH-ubiquinone oxidoreductase chain 3 (128 aa).

Helical transmembrane passes span T3 to I23, V52 to L72, and Y84 to I104.

This sequence belongs to the complex I subunit 3 family.

The protein resides in the mitochondrion membrane. It carries out the reaction a ubiquinone + NADH + 5 H(+)(in) = a ubiquinol + NAD(+) + 4 H(+)(out). Functionally, core subunit of the mitochondrial membrane respiratory chain NADH dehydrogenase (Complex I) that is believed to belong to the minimal assembly required for catalysis. Complex I functions in the transfer of electrons from NADH to the respiratory chain. The immediate electron acceptor for the enzyme is believed to be ubiquinone. The sequence is that of NADH-ubiquinone oxidoreductase chain 3 (ND3) from Debaryomyces hansenii (strain ATCC 36239 / CBS 767 / BCRC 21394 / JCM 1990 / NBRC 0083 / IGC 2968) (Yeast).